Here is a 449-residue protein sequence, read N- to C-terminus: Capsid protein (449 aa).

Residues M1 to R43 are DNA-binding. Residues R6–K47 form a nuclear localization signals region.

It belongs to the gyrovirus capsid protein family. In terms of assembly, homomultimer (Potential). Interacts with Rep; this interaction relocates Rep into the nucleus.

Its subcellular location is the host nucleus. The protein localises to the virion. Its function is as follows. Self-assembles to form the virion icosahedral capsid with a T=1 symmetry. This very small capsid (25 nm in diameter) allows the virus to be very stable in the environment and resistant to some disinfectants, including detergents. Essential for the initial attachment to host receptors. After attachment, the virus is endocytosed and traffics to the nucleus. The capsid protein binds and transports the viral genome and Rep across the nuclear envelope. The sequence is that of Capsid protein (VP1) from Chicken anemia virus (isolate Australia) (CAV).